A 104-amino-acid chain; its full sequence is Pterin-4-alpha-carbinolamine dehydratase (104 aa).

Alanine 2 carries the N-acetylalanine modification. Substrate-binding positions include 61-63 and 78-81; these read DHH and STHE.

The protein belongs to the pterin-4-alpha-carbinolamine dehydratase family. As to quaternary structure, homotetramer and homodimer. Heterotetramer with HNF1A; formed by a dimer of dimers. Interacts with HNF1B (via HNF-p1 domain); the interaction increases HNF1B transactivation activity.

The protein localises to the cytoplasm. The protein resides in the nucleus. It catalyses the reaction (4aS,6R)-4a-hydroxy-L-erythro-5,6,7,8-tetrahydrobiopterin = (6R)-L-erythro-6,7-dihydrobiopterin + H2O. In terms of biological role, involved in tetrahydrobiopterin biosynthesis. Seems to both prevent the formation of 7-pterins and accelerate the formation of quinonoid-BH2. Coactivator for HNF1A-dependent transcription. Regulates the dimerization of homeodomain protein HNF1A and enhances its transcriptional activity. Also acts as a coactivator for HNF1B-dependent transcription. The sequence is that of Pterin-4-alpha-carbinolamine dehydratase (PCBD1) from Bos taurus (Bovine).